Reading from the N-terminus, the 412-residue chain is Divalent metal cation transporter MntH (412 aa).

Over M1–L19 the chain is Cytoplasmic. The chain crosses the membrane as a helical span at residues A20–A39. Topologically, residues T40 to Q51 are periplasmic. The helical transmembrane segment at L52 to A71 threads the bilayer. Residues K72 to W95 are Cytoplasmic-facing. A helical transmembrane segment spans residues F96–I118. Over G119–G125 the chain is Periplasmic. The helical transmembrane segment at V126–L145 threads the bilayer. At Q146 to K155 the chain is on the cytoplasmic side. Residues V156–S175 form a helical membrane-spanning segment. The Periplasmic portion of the chain corresponds to Q176–A196. A helical membrane pass occupies residues V197–T220. The Cytoplasmic segment spans residues Q221–D238. A helical membrane pass occupies residues V239–A258. The Periplasmic portion of the chain corresponds to A259–Y276. A helical transmembrane segment spans residues L277–A297. Over A298–R327 the chain is Cytoplasmic. Residues R328–D344 form a helical membrane-spanning segment. The Periplasmic segment spans residues P345–V350. Residues M351 to F370 form a helical membrane-spanning segment. Residues T371–K387 are Cytoplasmic-facing. The chain crosses the membrane as a helical span at residues Q388–V406. Residues G407–L412 lie on the Periplasmic side of the membrane.

It belongs to the NRAMP family.

The protein localises to the cell inner membrane. In terms of biological role, h(+)-stimulated, divalent metal cation uptake system. This Shigella flexneri serotype 5b (strain 8401) protein is Divalent metal cation transporter MntH.